A 459-amino-acid polypeptide reads, in one-letter code: uncharacterized protein (459 aa).

The residue at position 285 (Lys285) is an N6-(pyridoxal phosphate)lysine.

It belongs to the class-III pyridoxal-phosphate-dependent aminotransferase family.

It is found in the cytoplasm. This is an uncharacterized protein from Schizosaccharomyces pombe (strain 972 / ATCC 24843) (Fission yeast).